The chain runs to 653 residues: uncharacterized protein (653 aa).

The next 2 helical transmembrane spans lie at 39-59 (AMTTLMVSLLMSSLPSGLKLI) and 207-227 (AVFVSIWLMVILGAAFNAFTI). Residues 225–277 (FTITKPIRELLTGVKNIASGDFHQRISLPFGGELGALIFNFNEMAERLEKYEQ) enclose the HAMP domain. Residues 286 to 356 (EKAKLETLVS…PALNDIVRKN (71 aa)) form the PAS domain. The region spanning 421–651 (NVSHELRTPL…CFFFDLIIAK (231 aa)) is the Histidine kinase domain. H424 bears the Phosphohistidine; by autocatalysis mark.

Its subcellular location is the plastid. The protein resides in the chloroplast membrane. It carries out the reaction ATP + protein L-histidine = ADP + protein N-phospho-L-histidine.. This is an uncharacterized protein from Pyropia yezoensis (Susabi-nori).